Reading from the N-terminus, the 175-residue chain is Large ribosomal subunit protein uL18 (175 aa).

Belongs to the universal ribosomal protein uL18 family. As to quaternary structure, part of the 50S ribosomal subunit. Contacts the 5S and 23S rRNAs.

In terms of biological role, this is one of the proteins that bind and probably mediate the attachment of the 5S RNA into the large ribosomal subunit, where it forms part of the central protuberance. The protein is Large ribosomal subunit protein uL18 of Methanoculleus marisnigri (strain ATCC 35101 / DSM 1498 / JR1).